Consider the following 154-residue polypeptide: Putative pre-16S rRNA nuclease (154 aa).

Belongs to the YqgF nuclease family.

The protein resides in the cytoplasm. In terms of biological role, could be a nuclease involved in processing of the 5'-end of pre-16S rRNA. In Rickettsia canadensis (strain McKiel), this protein is Putative pre-16S rRNA nuclease.